Reading from the N-terminus, the 201-residue chain is ATP-dependent Clp protease proteolytic subunit (201 aa).

The active-site Nucleophile is serine 98. Histidine 123 is an active-site residue.

It belongs to the peptidase S14 family. As to quaternary structure, fourteen ClpP subunits assemble into 2 heptameric rings which stack back to back to give a disk-like structure with a central cavity, resembling the structure of eukaryotic proteasomes.

Its subcellular location is the cytoplasm. It catalyses the reaction Hydrolysis of proteins to small peptides in the presence of ATP and magnesium. alpha-casein is the usual test substrate. In the absence of ATP, only oligopeptides shorter than five residues are hydrolyzed (such as succinyl-Leu-Tyr-|-NHMec, and Leu-Tyr-Leu-|-Tyr-Trp, in which cleavage of the -Tyr-|-Leu- and -Tyr-|-Trp bonds also occurs).. Its function is as follows. Cleaves peptides in various proteins in a process that requires ATP hydrolysis. Has a chymotrypsin-like activity. Plays a major role in the degradation of misfolded proteins. In Rickettsia typhi (strain ATCC VR-144 / Wilmington), this protein is ATP-dependent Clp protease proteolytic subunit.